Reading from the N-terminus, the 263-residue chain is Glucosamine-6-phosphate deaminase (263 aa).

The Proton acceptor; for enolization step role is filled by D72. The active-site For ring-opening step is the D141. H143 (proton acceptor; for ring-opening step) is an active-site residue. The active-site For ring-opening step is the E148.

It belongs to the glucosamine/galactosamine-6-phosphate isomerase family. NagB subfamily.

The catalysed reaction is alpha-D-glucosamine 6-phosphate + H2O = beta-D-fructose 6-phosphate + NH4(+). Its pathway is amino-sugar metabolism; N-acetylneuraminate degradation; D-fructose 6-phosphate from N-acetylneuraminate: step 5/5. Its activity is regulated as follows. Allosterically activated by N-acetylglucosamine 6-phosphate (GlcNAc6P). Its function is as follows. Catalyzes the reversible isomerization-deamination of glucosamine 6-phosphate (GlcN6P) to form fructose 6-phosphate (Fru6P) and ammonium ion. This is Glucosamine-6-phosphate deaminase from Porphyromonas gingivalis (strain ATCC 33277 / DSM 20709 / CIP 103683 / JCM 12257 / NCTC 11834 / 2561).